We begin with the raw amino-acid sequence, 296 residues long: Cholesterol ring-cleaving hydrolase IpdA subunit (296 aa).

The protein belongs to the 3-oxoacid CoA-transferase subunit A family. As to quaternary structure, heterotetramer composed of 2 IpdA subunits and 2 IpdB subunits.

It carries out the reaction (3E)-2-(2-carboxylatoethyl)-3-methyl-6-oxocyclohex-1-ene-1-carboxyl-CoA + H2O = 6-methyl-3,7-dioxodecanedioyl-CoA. Its pathway is steroid metabolism; cholesterol degradation. In terms of biological role, involved in the final steps of cholesterol and steroid degradation. Opens the last steroid ring of cholesterol by catalyzing the hydrolysis of (3E)-2-(2-carboxylatoethyl)-3-methyl-6-oxocyclohex-1-ene-1-carboxyl-CoA (COCHEA-CoA) to 6-methyl-3,7-dioxodecanedioyl-CoA (MeDODA-CoA). The polypeptide is Cholesterol ring-cleaving hydrolase IpdA subunit (Rhodococcus jostii (strain RHA1)).